Here is a 51-residue protein sequence, read N- to C-terminus: MARYRCCRSQSRSRCYRRGQRSRRRRRRSCQTRRRAMRCCRPRYRLRRRRH.

Belongs to the protamine P1 family. As to quaternary structure, cross-linked by interchain disulfide bonds around the DNA-helix. Testis.

The protein localises to the nucleus. The protein resides in the chromosome. Its function is as follows. Protamines substitute for histones in the chromatin of sperm during the haploid phase of spermatogenesis. They compact sperm DNA into a highly condensed, stable and inactive complex. The sequence is that of Sperm protamine P1 (PRM1) from Hylobates lar (Lar gibbon).